The sequence spans 66 residues: Large ribosomal subunit protein uL29 (66 aa).

It belongs to the universal ribosomal protein uL29 family.

In Bartonella tribocorum (strain CIP 105476 / IBS 506), this protein is Large ribosomal subunit protein uL29.